The primary structure comprises 305 residues: MILVTGGAGFIGSHIVDKLIENNYDVIILDNLTTGNKNNINPKAEFVNADIRDKDLDEKINFKDVEVVIHQAAQINVRNSVENPVYDGDINVLGTINILEMMRKYDIDKIVFASSGGAVYGEPNYLPVDENHPINPLSPYGLSKYVGEEYIKLYNRLYGIEYAILRYSNVYGERQDPKGEAGVISIFIDKMLKNQSPIIFGDGNQTRDFVYVGDVAKANLMALNWKNEIVNIGTGKETSVNELFDIIKHEIGFRGEAIYDKPREGEVYRIYLDIKKAESLGWKPEIDLKEGIKRVVNWMKNNNRT.

Residues 10–11 (FI), 30–35 (DNLTTG), 50–51 (DI), and 71–75 (QAAQI) each bind NAD(+). Substrate contacts are provided by Ser115 and Tyr140. NAD(+) is bound by residues Tyr140 and Lys144. Tyr140 functions as the Proton acceptor in the catalytic mechanism. Residues Asn169, 183 to 184 (VI), 198 to 200 (IIF), Arg207, and 263 to 266 (REGE) contribute to the substrate site.

It belongs to the NAD(P)-dependent epimerase/dehydratase family. NAD(+) serves as cofactor.

The catalysed reaction is UDP-alpha-D-glucose = UDP-alpha-D-galactose. Its pathway is carbohydrate metabolism; galactose metabolism. In terms of biological role, involved in the metabolism of galactose. Catalyzes the conversion of UDP-galactose (UDP-Gal) to UDP-glucose (UDP-Glc) through a mechanism involving the transient reduction of NAD. This is Putative UDP-glucose 4-epimerase from Methanocaldococcus jannaschii (strain ATCC 43067 / DSM 2661 / JAL-1 / JCM 10045 / NBRC 100440) (Methanococcus jannaschii).